We begin with the raw amino-acid sequence, 70 residues long: Large ribosomal subunit protein uL29 (70 aa).

It belongs to the universal ribosomal protein uL29 family.

This Clostridium novyi (strain NT) protein is Large ribosomal subunit protein uL29.